Consider the following 427-residue polypeptide: Trigger factor (427 aa).

A PPIase FKBP-type domain is found at 163–248 (GDVVNLDFDG…INEVKSKEVP (86 aa)).

Belongs to the FKBP-type PPIase family. Tig subfamily.

The protein localises to the cytoplasm. The enzyme catalyses [protein]-peptidylproline (omega=180) = [protein]-peptidylproline (omega=0). Functionally, involved in protein export. Acts as a chaperone by maintaining the newly synthesized protein in an open conformation. Functions as a peptidyl-prolyl cis-trans isomerase. This chain is Trigger factor, found in Macrococcus caseolyticus (strain JCSC5402) (Macrococcoides caseolyticum).